The sequence spans 102 residues: ATP synthase subunit c (102 aa).

The next 2 helical transmembrane spans lie at 34–54 (IGAG…GYIF) and 80–100 (AVSE…IFVA).

The protein belongs to the ATPase C chain family. As to quaternary structure, F-type ATPases have 2 components, F(1) - the catalytic core - and F(0) - the membrane proton channel. F(1) has five subunits: alpha(3), beta(3), gamma(1), delta(1), epsilon(1). F(0) has three main subunits: a(1), b(2) and c(10-14). The alpha and beta chains form an alternating ring which encloses part of the gamma chain. F(1) is attached to F(0) by a central stalk formed by the gamma and epsilon chains, while a peripheral stalk is formed by the delta and b chains.

Its subcellular location is the cell membrane. Its function is as follows. F(1)F(0) ATP synthase produces ATP from ADP in the presence of a proton or sodium gradient. F-type ATPases consist of two structural domains, F(1) containing the extramembraneous catalytic core and F(0) containing the membrane proton channel, linked together by a central stalk and a peripheral stalk. During catalysis, ATP synthesis in the catalytic domain of F(1) is coupled via a rotary mechanism of the central stalk subunits to proton translocation. Functionally, key component of the F(0) channel; it plays a direct role in translocation across the membrane. A homomeric c-ring of between 10-14 subunits forms the central stalk rotor element with the F(1) delta and epsilon subunits. In Mycoplasma genitalium (strain ATCC 33530 / DSM 19775 / NCTC 10195 / G37) (Mycoplasmoides genitalium), this protein is ATP synthase subunit c.